We begin with the raw amino-acid sequence, 323 residues long: Ferrochelatase (323 aa).

Fe cation-binding residues include H196 and E277.

It belongs to the ferrochelatase family.

It is found in the cytoplasm. It catalyses the reaction heme b + 2 H(+) = protoporphyrin IX + Fe(2+). Its pathway is porphyrin-containing compound metabolism; protoheme biosynthesis; protoheme from protoporphyrin-IX: step 1/1. Its function is as follows. Catalyzes the ferrous insertion into protoporphyrin IX. The chain is Ferrochelatase from Haemophilus influenzae (strain 86-028NP).